The sequence spans 24 residues: Heptapoietin A light chain (24 aa).

As to quaternary structure, heterodimer of a heavy and a light chain linked by disulfide bond(s).

Functionally, HPTA is an acidic heparin-binding growth factor for hepatocytes. The protein is Heptapoietin A light chain of Oryctolagus cuniculus (Rabbit).